Reading from the N-terminus, the 521-residue chain is MFTSEIGVVEEWLSEFKTLPETSLPNYATNLKDKSSLVTSLYKVIQEPQSELLEPVCHQLFEFYRSGEEQLLRFTLQFLPELMWCYLAVSASRDVHSSGCIEALLLGVYNLEIVDKHGHSKVLSFTIPSLSKPSVYHEPSSIGSMALTESALSQHGLSKVVYSGPHPQREMLTAQNRFEVLTFLLLCYNAALTYMPSVSLQSLCQICSRICVCGYPRQHVRKYRGVSSRIPISSGFMVQMLTGVYFAIYNGEWDLAQKALDDIIYRAQLELYPEPLLVANAIKASLPHGAMKSSKEGTRCIQVEITPTSSRISRNAVTSMSIRGHRWKRHGDTELTGQEELMDITEVDEGFYSRAASSTSQSGLSNSSHNCSNKTSVGKNQRRSGGSKAGAKERETAGESCRDHFARKQTQRAQSENLELLSLKRLTLTSSQSLPKPSSQGLAKTAATVFSKSFEQVSGAPVPRSPSPAIGCVAGADANRFSACSLQEEKLIYVSERTELAVKCQAGQQGPPSISVTLSAE.

Residue threonine 306 is modified to Phosphothreonine. Phosphoserine is present on serine 321. The segment covering alanine 355 to asparagine 373 has biased composition (low complexity). Positions alanine 355–alanine 413 are disordered. Positions glycine 390–alanine 406 are enriched in basic and acidic residues. Phosphoserine is present on residues serine 415, serine 422, serine 433, serine 453, and serine 465.

It belongs to the Hyccin family. As to quaternary structure, component of a phosphatidylinositol 4-kinase (PI4K) complex, composed of PI4KA, EFR3 (EFR3A or EFR3B), TTC7 (TTC7A or TTC7B) and HYCC (HYCC1 or HYCC2). Interacts with TTC7 (TTC7A or TTC7B), interaction is direct. In terms of tissue distribution, predominantly expressed in the central nervous system, where it is found in neurons but not in myelinating cells. Lower abundance is observed in peripheral neurons, where it is detectable only at early postnatal ages. Expressed in both oligodendrocytes and neurons.

The protein localises to the cytoplasm. Its subcellular location is the cytosol. The protein resides in the cell membrane. In terms of biological role, component of a complex required to localize phosphatidylinositol 4-kinase (PI4K) to the plasma membrane. The complex acts as a regulator of phosphatidylinositol 4-phosphate (PtdIns(4)P) synthesis. HYCC1 plays a key role in oligodendrocytes formation, a cell type with expanded plasma membrane that requires generation of PtdIns(4)P. Its role in oligodendrocytes formation probably explains its importance in myelination of the central and peripheral nervous system. May also have a role in the beta-catenin/Lef signaling pathway. This Mus musculus (Mouse) protein is Hyccin (Hycc1).